The chain runs to 171 residues: Co-chaperone protein HscB (171 aa).

One can recognise a J domain in the interval 2–74; that stretch reads DYFTLFGLPA…LMRAEYLLSL (73 aa).

This sequence belongs to the HscB family. Interacts with HscA and stimulates its ATPase activity. Interacts with IscU.

Functionally, co-chaperone involved in the maturation of iron-sulfur cluster-containing proteins. Seems to help targeting proteins to be folded toward HscA. This is Co-chaperone protein HscB from Escherichia coli (strain SMS-3-5 / SECEC).